Reading from the N-terminus, the 319-residue chain is tRNA uridine(34) hydroxylase (319 aa).

The Rhodanese domain maps to 125–219 (LDENTVVIDA…YGKDPEVQGD (95 aa)). Cys179 acts as the Cysteine persulfide intermediate in catalysis.

It belongs to the TrhO family.

It catalyses the reaction uridine(34) in tRNA + AH2 + O2 = 5-hydroxyuridine(34) in tRNA + A + H2O. In terms of biological role, catalyzes oxygen-dependent 5-hydroxyuridine (ho5U) modification at position 34 in tRNAs. This chain is tRNA uridine(34) hydroxylase, found in Lactococcus lactis subsp. lactis (strain IL1403) (Streptococcus lactis).